Consider the following 143-residue polypeptide: Peptide methionine sulfoxide reductase MsrB (143 aa).

The MsrB domain maps to 5–127 (NEELKKKLTP…NSAALRFIPK (123 aa)). The active-site Nucleophile is Cys-116.

Belongs to the MsrB Met sulfoxide reductase family.

The enzyme catalyses L-methionyl-[protein] + [thioredoxin]-disulfide + H2O = L-methionyl-(R)-S-oxide-[protein] + [thioredoxin]-dithiol. This chain is Peptide methionine sulfoxide reductase MsrB, found in Halalkalibacterium halodurans (strain ATCC BAA-125 / DSM 18197 / FERM 7344 / JCM 9153 / C-125) (Bacillus halodurans).